Reading from the N-terminus, the 2596-residue chain is Protein unc-79 homolog (2596 aa).

Phosphoserine is present on residues serine 754 and serine 758. 6 disordered regions span residues 907-931, 1539-1573, 1594-1632, 1648-1679, 1695-1832, and 1863-1909; these read GPEG…TVPS, SQRQ…GFQE, VDSP…DSDS, EEEE…SVLS, KDFS…FKIQ, and LGEQ…KQIQ. Residues 1594–1606 are compositionally biased toward basic and acidic residues; the sequence is VDSPGKPAPREDL. A compositionally biased stretch (low complexity) spans 1662–1679; that stretch reads GNNAASSPSIPSQPSVLS. Residues 1704–1713 show a composition bias toward polar residues; it reads NHQSASNEDS. The span at 1726–1735 shows a compositional bias: basic and acidic residues; that stretch reads ELSKSEELRE. A compositionally biased stretch (polar residues) spans 1897–1908; sequence ETSSHSSISKQI. The next 2 membrane-spanning stretches (helical) occupy residues 2184–2204 and 2426–2446; these read LLSF…ELCG and CVLH…WTVY.

This sequence belongs to the unc-79 family. In terms of assembly, NALCN complex consists of NALCN and auxiliary subunits, UNC79, UNC80 and NACL1. These auxiliary subunits are essential for the NALCN channel function. UNC80 bridges NALCN to UNC79. Interacts with NALCN. Interacts with UNC80.

Its subcellular location is the cell membrane. Functionally, auxiliary subunit of the NALCN sodium channel complex. The NALCN sodium channel complex is a voltage-gated ion channel responsible for the resting Na(+) permeability that controls neuronal excitability. Activated by neuropeptides substance P, neurotensin, and extracellular calcium that regulates neuronal excitability by controlling the sizes of NALCN-dependent sodium-leak current. This Mus musculus (Mouse) protein is Protein unc-79 homolog (Unc79).